A 415-amino-acid polypeptide reads, in one-letter code: Calcium/calmodulin-dependent serine/threonine-protein kinase (415 aa).

The Protein kinase domain occupies 12-308 (YEISEILGRG…AQELLDHPWV (297 aa)). ATP contacts are provided by residues 18–26 (LGRGGFSVV) and K46. D173 serves as the catalytic Proton acceptor. The tract at residues 318 to 328 (MDAEIVSRLQS) is calmodulin-binding.

Belongs to the protein kinase superfamily. CAMK Ser/Thr protein kinase family. CaMK subfamily.

The catalysed reaction is L-seryl-[protein] + ATP = O-phospho-L-seryl-[protein] + ADP + H(+). It carries out the reaction L-threonyl-[protein] + ATP = O-phospho-L-threonyl-[protein] + ADP + H(+). Its function is as follows. May be involved in signal transduction processes. The protein is Calcium/calmodulin-dependent serine/threonine-protein kinase of Malus domestica (Apple).